The primary structure comprises 262 residues: Small ribosomal subunit protein uS2 (262 aa).

Belongs to the universal ribosomal protein uS2 family.

The polypeptide is Small ribosomal subunit protein uS2 (Roseiflexus sp. (strain RS-1)).